The following is a 152-amino-acid chain: Nucleoside diphosphate kinase (152 aa).

Residues lysine 11, phenylalanine 59, arginine 87, threonine 93, arginine 104, and asparagine 114 each contribute to the ATP site. Residue histidine 117 is the Pros-phosphohistidine intermediate of the active site.

It belongs to the NDK family. In terms of assembly, homotetramer. Mg(2+) is required as a cofactor.

The protein resides in the cytoplasm. The enzyme catalyses dZDP + ATP = dZTP + ADP. It carries out the reaction a 2'-deoxyribonucleoside 5'-diphosphate + ATP = a 2'-deoxyribonucleoside 5'-triphosphate + ADP. The catalysed reaction is a ribonucleoside 5'-diphosphate + ATP = a ribonucleoside 5'-triphosphate + ADP. It participates in purine metabolism. Major role in the synthesis of nucleoside triphosphates other than ATP. The ATP gamma phosphate is transferred to the NDP beta phosphate via a ping-pong mechanism, using a phosphorylated active-site intermediate. Its function is as follows. (Microbial infection) Catalyzes the phosphorylation of dZDP to dZTP, when the bacterium is infected by a phage that produces the substrate for the synthesis of dZTP (2- amino-2'-deoxyadenosine 5'-triphosphate), which is then used by the phage as a DNA polymerase substrate. In Synechococcus sp. (strain WH7803), this protein is Nucleoside diphosphate kinase.